A 671-amino-acid chain; its full sequence is Nucleolar GTP-binding protein 1 (671 aa).

The OBG-type G domain occupies 169-350 (RTVLICGYPN…VKNAACERLL (182 aa)). GTP is bound by residues 175-182 (GYPNVGKS), 221-225 (DTPGI), and 289-292 (NKTD). A disordered region spans residues 516–671 (VAQNRSTVPR…KRGKGKTDRR (156 aa)). Positions 595–605 (RAMSISRSQSR) are enriched in polar residues. Composition is skewed to basic residues over residues 631–640 (NKSHKKRDKN) and 654–671 (RPKH…TDRR).

The protein belongs to the TRAFAC class OBG-HflX-like GTPase superfamily. OBG GTPase family. NOG subfamily.

The protein resides in the nucleus. It localises to the nucleolus. Functionally, involved in the biogenesis of the 60S ribosomal subunit. The sequence is that of Nucleolar GTP-binding protein 1 from Arabidopsis thaliana (Mouse-ear cress).